A 367-amino-acid chain; its full sequence is MLMRFSRVVSLVLLLVFTAVLTGAVKASLNDKPVGFASVPTADLPEGTVGGLGGEIVFVRTAEELEKYTTAEGKYVIVVDGTIVFEPKREIKVLSDKTIVGINDAKIVGGGLVIKDAQNVIIRNIHFEGFYMEDDPRGKKYDFDYINVENSHHIWIDHCTFVNGNDGAVDIKKYSNYITVSWCKFVDHDKVSLVGSSDKEDPEQAGQAYKVTYHHNYFKNCIQRMPRIRFGMAHVFNNFYSMGLRTGVSGNVFPIYGVASAMGAKVHVEGNYFMGYGAVMAEAGIAFLPTRIMGPVEGYLTLGEGDAKNEFYYCKEPEVRPVEEGKPALDPREYYDYTLDPVQDVPKIVVDGAGAGKLVFEELNTAQ.

An N-terminal signal peptide occupies residues 1 to 27 (MLMRFSRVVSLVLLLVFTAVLTGAVKA). The Ca(2+) site is built by Asp-144, Asp-166, and Asp-170. The PbH1 1 repeat unit spans residues 151 to 173 (SHHIWIDHCTFVNGNDGAVDIKK). Arg-224 is a catalytic residue. The PbH1 2 repeat unit spans residues 263–289 (GAKVHVEGNYFMGYGAVMAEAGIAFLP).

Belongs to the polysaccharide lyase 1 family. As to quaternary structure, homotetramer. The cofactor is Ca(2+).

Its subcellular location is the secreted. The catalysed reaction is eliminative cleavage of unsaturated trigalacturonate as the major product from the reducing end of polygalacturonic acid/pectate.. Its activity is regulated as follows. Completely inactivated by EGTA. In terms of biological role, cleaves unsaturated trigalacturonate from pectin. Activity is highest towards polygalacturonic acid, activity on methylated pectins decreases with an increasing degree of methylation. The polypeptide is Pectate trisaccharide-lyase (Thermotoga maritima (strain ATCC 43589 / DSM 3109 / JCM 10099 / NBRC 100826 / MSB8)).